The chain runs to 1362 residues: MAYSFTEKKRIRKDFGKSQSILAVPYLLATQMDSYREFLQESVPPAARKETGLEAVFRSVFPMESYSGNAMLDYVSYRLEKPVFDVVECRQRGLTYCAGLRVRLRLAVMEKDDTTGAKRVKDVKEQDVYMGELPLMTEHGSFVINGTERVIVSQLHRSPGVFFDHDRGKTHSSGKLLFNARIIPYRGSWLDFEFDPKDHVYARIDRRRKLPATTLLRALGYSTQDILEMFFDMETFRLIDGDLRYVLIPQRLQGEVAAFDIVSPETGDVLVQAGKRITVRQTKALSEVQGLHEIPVPDSFLLGKVVARDIVHPETGEVVVQANEPVSGELLDALRKMPSLTLHTLYLNELDRGPYISETLRIDTSRDAHDAQMEIYRLMRPGEPPTKDAAQNLFQGLFFSPDRYDLSAVGRMKFNRRVGRDEITGPGVLNDADIIAVLKVLVALRNGVGEIDDIDHLGNRRVRSVGELMENQFRLGLVRVERAVKDRLALAESEGLTPQDLINAKPIAAVVNEFFGSSQLSQFMDQTNPLSEVTHKRRVSALGPGGLTRERAGFEVRDVHPTHYGRICPIETPEGPNIGLINSLSCYARTNSYGFLETPYRRVVDRRTTDEVEYLSAIEEGNYMIAQANSTVDEHGVLTDELVSCRFKNEFTLANPDQVQFMDISPRQIVSVAASMIPFLEHDDANRALMGSNMQRQAVPTVRSDAPMVGTGMERVVAIDSGAAVVARRGGVVDIVDGARIVIRVSDEETLPEEPGVDIYNLVKYARSNQNTTLNQRPVVKVGDVVSRGDVLADGPSTEMGELALGQNILVAFMPWNGYNFEDSILISERVVAEDRYTTIHIEEFSVFARDTKLGPEEITRDIPNVAEGALRHLDESGIVVIGAELAPGDILVGKVTPKGETQLTPEEKLLRAIFGEKASDVKDNSMRMPAGMYGTVIDVQVFTRDGIEKDARAKSIEEHELARIRKDLNDQYRIVEEDSYQRIERQLIGKVAEGGPNGLAAGNKVTKAYLKDLPRAKWFEIRLRTEESNESLEQIRAQLEEQRQRLDAVLEEKRRKLTQGDDLSPGVLKMVKVHVAIKRHLQPGDKMAGRHGNKGVVSKIVPVEDMPYLADGTAVDIVLNPLGVPSRMNVGQILETHLGWAAKGLGKKIGAMLDSEVAMAEMRAFLAEIYNRSGKKEDLDSLTDQEIRELSANLRGGVPMATPVFDGASEEEIGDMLELAGLPRSGQVTLYDGRSGDAFDRPVTVGYLYMLKLHHLVDDKMHARSTGPYSLVTQQPLGGKAQFGGQRFGEMEVWALEAYGAAYTLQEMLTVKSDDVSGRSKMYESIVKGDFRMDAGMPESFNVLLKELRSLGIDIELEQSK.

It belongs to the RNA polymerase beta chain family. As to quaternary structure, the RNAP catalytic core consists of 2 alpha, 1 beta, 1 beta' and 1 omega subunit. When a sigma factor is associated with the core the holoenzyme is formed, which can initiate transcription.

The enzyme catalyses RNA(n) + a ribonucleoside 5'-triphosphate = RNA(n+1) + diphosphate. DNA-dependent RNA polymerase catalyzes the transcription of DNA into RNA using the four ribonucleoside triphosphates as substrates. The sequence is that of DNA-directed RNA polymerase subunit beta from Acidithiobacillus ferrooxidans (strain ATCC 23270 / DSM 14882 / CIP 104768 / NCIMB 8455) (Ferrobacillus ferrooxidans (strain ATCC 23270)).